The chain runs to 275 residues: ATP synthase subunit delta (275 aa).

Belongs to the ATPase delta chain family. F-type ATPases have 2 components, F(1) - the catalytic core - and F(0) - the membrane proton channel. F(1) has five subunits: alpha(3), beta(3), gamma(1), delta(1), epsilon(1). F(0) has three main subunits: a(1), b(2) and c(10-14). The alpha and beta chains form an alternating ring which encloses part of the gamma chain. F(1) is attached to F(0) by a central stalk formed by the gamma and epsilon chains, while a peripheral stalk is formed by the delta and b chains.

Its subcellular location is the cell membrane. F(1)F(0) ATP synthase produces ATP from ADP in the presence of a proton or sodium gradient. F-type ATPases consist of two structural domains, F(1) containing the extramembraneous catalytic core and F(0) containing the membrane proton channel, linked together by a central stalk and a peripheral stalk. During catalysis, ATP synthesis in the catalytic domain of F(1) is coupled via a rotary mechanism of the central stalk subunits to proton translocation. Functionally, this protein is part of the stalk that links CF(0) to CF(1). It either transmits conformational changes from CF(0) to CF(1) or is implicated in proton conduction. The polypeptide is ATP synthase subunit delta (Arthrobacter sp. (strain FB24)).